The following is a 1036-amino-acid chain: Protein smoothened (1036 aa).

The N-terminal stretch at 1-31 (MQYLNFPRMPNIMMFLEVAILCLWVVADASA) is a signal peptide. The Extracellular segment spans residues 32-258 (SSAKFGSTTP…DDEHRQIHKL (227 aa)). N-linked (GlcNAc...) asparagine glycosylation is found at Asn-55 and Asn-95. The 122-residue stretch at 85–206 (VRRARCYPTS…TLFPTKCTNG (122 aa)) folds into the FZ domain. Cystine bridges form between Cys-90-Cys-155, Cys-100-Cys-148, Cys-139-Cys-179, and Cys-172-Cys-194. N-linked (GlcNAc...) asparagine glycosylation is found at Asn-184, Asn-195, and Asn-213. Cystine bridges form between Cys-218–Cys-238 and Cys-242–Cys-320. Residues 259–279 (IGWAGSICLLSNLFVVSTFFI) traverse the membrane as a helical segment. Over 280–287 (DWKNANKY) the chain is Cytoplasmic. Residues 288-308 (PAVIVFYINLCFLIACVGWLL) traverse the membrane as a helical segment. The Extracellular segment spans residues 309-339 (QFTSGSREDIVCRKDGTLRHSEPTAGENLSC). The N-linked (GlcNAc...) asparagine glycan is linked to Asn-336. Cys-339 and Cys-413 are oxidised to a cystine. Residues 340–360 (IVIFVLVYYFLTAGMVWFVFL) form a helical membrane-spanning segment. The Cytoplasmic portion of the chain corresponds to 361–381 (TYAWHWRAMGHVQDRIDKKGS). A helical transmembrane segment spans residues 382 to 402 (YFHLVAWSLPLVLTITTMAFS). At 403 to 421 (EVDGNSIVGICFVGYINHS) the chain is on the extracellular side. N-linked (GlcNAc...) asparagine glycosylation is present at Asn-419. The helical transmembrane segment at 422 to 442 (MRAGLLLGPLCGVILIGGYFI) threads the bilayer. At 443–469 (TRGMVMLFGLKHFANDIKSTSASNKIH) the chain is on the cytoplasmic side. The chain crosses the membrane as a helical span at residues 470–490 (LIIMRMGVCALLTLVFILVAI). The Extracellular portion of the chain corresponds to 491 to 532 (ACHVTEFRHADEWAQSFRQFIICKISSVFEEKSSCRIENRPS). Cys-513 and Cys-525 are joined by a disulfide. The chain crosses the membrane as a helical span at residues 533–553 (VGVLQLHLLCLFSSGIVMSTW). At 554–1036 (CWTPSSIETW…KLKMLLLPSK (483 aa)) the chain is on the cytoplasmic side. A phosphoserine mark is found at Ser-658, Ser-659, Ser-667, Ser-670, Ser-673, Ser-687, Ser-690, and Ser-693. Disordered regions lie at residues 678-745 (HVSV…TSVE) and 870-902 (IKKSNESNSNRHSRNSARSQSKKSQKRHLKNPA). Positions 880 to 899 (RHSRNSARSQSKKSQKRHLK) are enriched in basic residues.

Belongs to the G-protein coupled receptor Fz/Smo family. Interacts with cos. Phosphorylation by CkIalpha and PKA regulates smo accumulation at the cell surface and its signaling activity in response to hh. As to expression, expressed in olfactory sensory neurons (at protein level).

Its subcellular location is the cell membrane. It is found in the cell projection. The protein localises to the cilium. Functionally, segment polarity protein required for correct patterning of every segment. G protein-coupled receptor which associates with the patched protein (ptc) to transduce the hedgehog (hh) signal through the activation of an inhibitory G-protein. In the absence of hh, ptc represses the constitutive signaling activity of smo through fused (fu). Essential component of a hh-signaling pathway which regulates the Duox-dependent gut immune response to bacterial uracil; required to activate Cad99C-dependent endosome formation, norpA-dependent Ca2+ mobilization and p38 MAPK, which are essential steps in the Duox-dependent production of reactive oxygen species (ROS) in response to intestinal bacterial infection. The protein is Protein smoothened (smo) of Drosophila melanogaster (Fruit fly).